Here is an 84-residue protein sequence, read N- to C-terminus: Beta-defensin 119 (84 aa).

The signal sequence occupies residues 1–21 (MKLLYLFLAILLAIEEPVISG). Cystine bridges form between Cys-35–Cys-49 and Cys-39–Cys-56.

The protein belongs to the beta-defensin family.

It is found in the secreted. Its function is as follows. Has antibacterial activity. This chain is Beta-defensin 119 (DEFB119), found in Pan troglodytes (Chimpanzee).